The sequence spans 117 residues: Immunoglobulin lambda variable 7-43 (117 aa).

Residues 1 to 19 form the signal peptide; sequence MAWTPLFLFLLTCCPGSNS. The framework-1 stretch occupies residues 20 to 44; the sequence is QTVVTQEPSLTVSPGGTVTLTCASS. Positions 20–117 constitute an Ig-like domain; sequence QTVVTQEPSL…YCLLYYGGAQ (98 aa). Cys-41 and Cys-109 are joined by a disulfide. A complementarity-determining-1 region spans residues 45–53; that stretch reads TGAVTSGYY. Positions 54-70 are framework-2; the sequence is PNWFQQKPGQAPRALIY. The segment at 71 to 73 is complementarity-determining-2; the sequence is STS. The segment at 74–109 is framework-3; it reads NKHSWTPARFSGSLLGGKAALTLSGVQPEDEAEYYC. The interval 110–117 is complementarity-determining-3; the sequence is LLYYGGAQ.

As to quaternary structure, immunoglobulins are composed of two identical heavy chains and two identical light chains; disulfide-linked.

The protein resides in the secreted. The protein localises to the cell membrane. Its function is as follows. V region of the variable domain of immunoglobulin light chains that participates in the antigen recognition. Immunoglobulins, also known as antibodies, are membrane-bound or secreted glycoproteins produced by B lymphocytes. In the recognition phase of humoral immunity, the membrane-bound immunoglobulins serve as receptors which, upon binding of a specific antigen, trigger the clonal expansion and differentiation of B lymphocytes into immunoglobulins-secreting plasma cells. Secreted immunoglobulins mediate the effector phase of humoral immunity, which results in the elimination of bound antigens. The antigen binding site is formed by the variable domain of one heavy chain, together with that of its associated light chain. Thus, each immunoglobulin has two antigen binding sites with remarkable affinity for a particular antigen. The variable domains are assembled by a process called V-(D)-J rearrangement and can then be subjected to somatic hypermutations which, after exposure to antigen and selection, allow affinity maturation for a particular antigen. The polypeptide is Immunoglobulin lambda variable 7-43 (Homo sapiens (Human)).